Here is a 425-residue protein sequence, read N- to C-terminus: UBX domain-containing protein 4 (425 aa).

The interval 224–257 is disordered; it reads TPIPSLPSTPSSYQNLPSQSLTGESLPTVSNQEK. The segment covering 236–254 has biased composition (polar residues); it reads YQNLPSQSLTGESLPTVSN. Phosphoserine is present on Ser-338. Residues 341–390 enclose the UBX domain; sequence PLPSSAIVKFDFGNGKSIVHEFSKDDNIETLRAFVASHLSPEESTSFQLT.

It localises to the cytoplasm. Its subcellular location is the nucleus. Involved in CDC48-dependent protein degradation through the ubiquitin/proteasome pathway. The chain is UBX domain-containing protein 4 (ubx4) from Schizosaccharomyces pombe (strain 972 / ATCC 24843) (Fission yeast).